A 228-amino-acid chain; its full sequence is ATP-dependent dethiobiotin synthetase BioD (228 aa).

Residue 12 to 17 participates in ATP binding; sequence EIGKTT. Threonine 16 contributes to the Mg(2+) binding site. The active site involves lysine 37. Serine 41 provides a ligand contact to substrate. Residues aspartate 54, 116–119, and 205–207 each bind ATP; these read EGAG and PRL. Residues aspartate 54 and glutamate 116 each coordinate Mg(2+).

It belongs to the dethiobiotin synthetase family. Homodimer. The cofactor is Mg(2+).

The protein resides in the cytoplasm. It carries out the reaction (7R,8S)-7,8-diammoniononanoate + CO2 + ATP = (4R,5S)-dethiobiotin + ADP + phosphate + 3 H(+). The protein operates within cofactor biosynthesis; biotin biosynthesis; biotin from 7,8-diaminononanoate: step 1/2. Its function is as follows. Catalyzes a mechanistically unusual reaction, the ATP-dependent insertion of CO2 between the N7 and N8 nitrogen atoms of 7,8-diaminopelargonic acid (DAPA, also called 7,8-diammoniononanoate) to form a ureido ring. In Pseudomonas paraeruginosa (strain DSM 24068 / PA7) (Pseudomonas aeruginosa (strain PA7)), this protein is ATP-dependent dethiobiotin synthetase BioD.